Reading from the N-terminus, the 146-residue chain is Hemoglobin subunit beta-2 (146 aa).

Residues 2–146 form the Globin domain; it reads HWSAEEKQLI…VAHALARRYH (145 aa). Residues His63 and His92 each contribute to the heme b site.

This sequence belongs to the globin family. As to quaternary structure, heterotetramer of two alpha chains and two beta chains. As to expression, red blood cells.

Its function is as follows. Involved in oxygen transport from the lung to the various peripheral tissues. This Naja naja (Indian cobra) protein is Hemoglobin subunit beta-2 (HBB2).